The sequence spans 46 residues: Protein PsbN (46 aa).

Residues 7–27 (ALSVALGVMAVVLGLTGFGVY) form a helical membrane-spanning segment.

Belongs to the PsbN family.

It localises to the cellular thylakoid membrane. In terms of biological role, may play a role in photosystem I and II biogenesis. This is Protein PsbN from Synechococcus sp. (strain CC9902).